The chain runs to 213 residues: Kynurenine formamidase (213 aa).

Substrate is bound at residue Trp-18. 3 residues coordinate Zn(2+): His-48, His-52, and Asp-54. The active-site Proton donor/acceptor is the His-58. The Zn(2+) site is built by His-160 and Glu-172.

This sequence belongs to the Cyclase 1 superfamily. KynB family. As to quaternary structure, homodimer. Zn(2+) is required as a cofactor.

The enzyme catalyses N-formyl-L-kynurenine + H2O = L-kynurenine + formate + H(+). It functions in the pathway amino-acid degradation; L-tryptophan degradation via kynurenine pathway; L-kynurenine from L-tryptophan: step 2/2. Functionally, catalyzes the hydrolysis of N-formyl-L-kynurenine to L-kynurenine, the second step in the kynurenine pathway of tryptophan degradation. The protein is Kynurenine formamidase of Burkholderia pseudomallei (strain 1106a).